The sequence spans 414 residues: Probable uracil permease (414 aa).

The Cytoplasmic segment spans residues 1-14; that stretch reads MTNQIPPSLAENQS. Residues 15 to 38 traverse the membrane as a helical segment; that stretch reads KLKQSFVGLQMLFVAFGALVLVPL. Residues 39–42 are Periplasmic-facing; sequence ITGL. A helical membrane pass occupies residues 43-62; the sequence is DSNTALLTAGVGTLLFQFCT. Residues 63-65 are Cytoplasmic-facing; that stretch reads GKQ. A discontinuously helical transmembrane segment spans residues 66-82; that stretch reads VPIFLASSFAFIAPIQY. Residue Phe-74 coordinates uracil. Over 83–91 the chain is Periplasmic; that stretch reads GVQTWGIAT. The helical transmembrane segment at 92–112 threads the bilayer; sequence TMGGLAFTGLVYFALSTLVKL. Residues 113-124 lie on the Cytoplasmic side of the membrane; the sequence is RGAEALQRFFPP. The chain crosses the membrane as a helical span at residues 125–146; sequence VVVGPVIIIIGMGLAPIAVDMS. Over 147–155 the chain is Periplasmic; the sequence is LGKNSAYAY. The helical transmembrane segment at 156-171 threads the bilayer; that stretch reads NDAVLVSMVTLLTTLS. Residues 172-178 are Cytoplasmic-facing; the sequence is VAVFAKG. The chain crosses the membrane as a helical span at residues 179–199; the sequence is LMKLIPIMFGITAGYILCLFL. The Periplasmic segment spans residues 200-224; sequence GLINFQPVIDAPWFSLPKLTTPEFN. A helical transmembrane segment spans residues 225–248; it reads LEAILYMLPIAIAPAVEHVGGIMA. Glu-241 serves as a coordination point for uracil. Residues 249 to 261 are Cytoplasmic-facing; that stretch reads ISSVTGKDFLKKP. The chain crosses the membrane as a helical span at residues 262 to 281; sequence GLHRTLLGDGIATAAASLVG. The discontinuously helical transmembrane segment at 282–298 threads the bilayer; it reads GPPNTTYAEVTGAVMLT. A uracil-binding site is contributed by Glu-290. The Cytoplasmic segment spans residues 299–301; the sequence is RNF. Residues 302 to 319 traverse the membrane as a helical segment; it reads NPNIMTWAAVWAIAISFC. The Periplasmic segment spans residues 320–332; the sequence is GKVGAFLSTIPTI. The helical transmembrane segment at 333 to 354 threads the bilayer; that stretch reads VMGGIMMLVFGSIAVVGMSTLI. Topologically, residues 355 to 365 are cytoplasmic; it reads RGKVDVTEARN. The segment at residues 366 to 401 is an intramembrane region (discontinuously helical); that stretch reads LCIISVVMTFGIGNMFVDVGNVSLKGISLCAIVAII. Over 402–414 the chain is Cytoplasmic; that stretch reads LNLVLPKAKNEVE.

The protein belongs to the nucleobase:cation symporter-2 (NCS2) (TC 2.A.40) family.

The protein localises to the cell inner membrane. It carries out the reaction uracil(in) + H(+)(in) = uracil(out) + H(+)(out). Its function is as follows. Transport of uracil in the cell. This chain is Probable uracil permease (uraA), found in Haemophilus influenzae (strain ATCC 51907 / DSM 11121 / KW20 / Rd).